The sequence spans 970 residues: Cullin-4B (970 aa).

Residues 1–14 (MSRSTRSKERREND) show a composition bias toward basic and acidic residues. Disordered stretches follow at residues 1-157 (MSRS…SFCL) and 189-211 (AEES…QQQQ). Residue threonine 15 is modified to Phosphothreonine. Residue serine 17 is modified to Phosphoserine. Residues 36–57 (PPRPPYPPLLPPVFPPPTPPPQ) are compositionally biased toward pro residues. Low complexity predominate over residues 78 to 98 (SGFSSPNPSAASAAAQEVRSA). A compositionally biased stretch (polar residues) spans 99-109 (TDGNTSTTPPT). Threonine 106 bears the Phosphothreonine mark. Serine 110 carries the phosphoserine modification. Residues 112–115 (KKRK) carry the Nuclear localization signal motif. The span at 117–126 (NSSSSSSNSS) shows a compositional bias: low complexity. Residues 146–155 (DSASPSTSSF) show a composition bias toward polar residues. Phosphoserine is present on residues serine 154 and serine 200. The span at 192–211 (SSSSSSSSSPTAATSQQQQQ) shows a compositional bias: low complexity. Threonine 202 carries the post-translational modification Phosphothreonine. Lysine 247 participates in a covalent cross-link: Glycyl lysine isopeptide (Lys-Gly) (interchain with G-Cter in ubiquitin). Position 250 is a phosphoserine (serine 250). A Cullin neddylation domain is found at 902–962 (DRQYQIDAAI…RDYMERDKEN (61 aa)). A Glycyl lysine isopeptide (Lys-Gly) (interchain with G-Cter in NEDD8) cross-link involves residue lysine 916.

Belongs to the cullin family. As to quaternary structure, component of multiple DCX (DDB1-CUL4-X-box) E3 ubiquitin-protein ligase complexes that seem to be formed of DDB1, CUL4A or CUL4B, RBX1 and a variable substrate recognition component which seems to belong to a protein family described as DCAF (Ddb1- and Cul4-associated factor) or CDW (CUL4-DDB1-associated WD40-repeat) proteins. Component of the DCX(DTL) complex with the putative substrate recognition component DTL. Component of the DCX(DDB2) complex with the putative substrate recognition component DDB2. Component of DCX complexes part of the DesCEND (destruction via C-end degrons) pathway, which contain either TRPC4AP or DCAF12 as substrate-recognition component. Component of the DCX(AMBRA1) complex with the substrate recognition component AMBRA1. Part of a complex with RBX1 and TIP120A/CAND1. Component of the DCX(WDR77) complex, composed of Cul4b, Ddb1, Wdr77 and Rbx1. Interacts with RBX1, GRWD1, MLST8, SMU1, TLE2, TLE3, DCAF1, DDA1, DCAF6, DCAF17, DDB2, DCAF8, TIP120A/CAND1 and TMEM113. Interacts with cyclin E (CCNE1 or CCNE2) and with importins alpha-1 (KPNA2), alpha-3 (KPNA4), alpha-5 (KPNA1) and beta-1 (KPNB1). May interact with WDR26, WDR51B, SNRNP40, WDR61, WDR76 and WDR5. Interacts (unneddylated form) with DCUN1D1, DCUN1D2, DCUN1D3, DCUN1D4 and DCUN1D5; these interactions promote the cullin neddylation. Post-translationally, neddylated. Deneddylated via its interaction with the COP9 signalosome (CSN) complex. In terms of tissue distribution, expressed in oocytes (at protein level).

It is found in the cytoplasm. Its subcellular location is the nucleus. Its pathway is protein modification; protein ubiquitination. Functionally, core component of multiple cullin-RING-based E3 ubiquitin-protein ligase complexes which mediate the ubiquitination and subsequent proteasomal degradation of target proteins. The functional specificity of the E3 ubiquitin-protein ligase complex depends on the variable substrate recognition subunit. CUL4B may act within the complex as a scaffold protein, contributing to catalysis through positioning of the substrate and the ubiquitin-conjugating enzyme. Plays a role as part of the E3 ubiquitin-protein ligase complex in polyubiquitination of CDT1, histone H2A, histone H3 and histone H4 in response to radiation-induced DNA damage. Targeted to UV damaged chromatin by DDB2 and may be important for DNA repair and DNA replication. A number of DCX complexes (containing either TRPC4AP or DCAF12 as substrate-recognition component) are part of the DesCEND (destruction via C-end degrons) pathway, which recognizes a C-degron located at the extreme C terminus of target proteins, leading to their ubiquitination and degradation. The DCX(AMBRA1) complex is a master regulator of the transition from G1 to S cell phase by mediating ubiquitination of phosphorylated cyclin-D (CCND1, CCND2 and CCND3). The DCX(AMBRA1) complex also acts as a regulator of Cul5-RING (CRL5) E3 ubiquitin-protein ligase complexes by mediating ubiquitination and degradation of Elongin-C (ELOC) component of CRL5 complexes. Required for ubiquitination of cyclin E (CCNE1 or CCNE2), and consequently, normal G1 cell cycle progression. Component of the DCX(WDR77) complex, which mediates ubiquitination and degradation of Irgm1 in intestinal cells. Regulates the mammalian target-of-rapamycin (mTOR) pathway involved in control of cell growth, size and metabolism. Specific CUL4B regulation of the mTORC1-mediated pathway is dependent upon 26S proteasome function and requires interaction between CUL4B and MLST8. With CUL4A, contributes to ribosome biogenesis. The polypeptide is Cullin-4B (Mus musculus (Mouse)).